A 117-amino-acid polypeptide reads, in one-letter code: uncharacterized protein (117 aa).

Residues 1–19 are compositionally biased toward polar residues; sequence MTSNPSSSADQPLSGTTVP. The segment at 1 to 28 is disordered; the sequence is MTSNPSSSADQPLSGTTVPGSVPGKAPE. The next 2 helical transmembrane spans lie at 38–58 and 76–96; these read AAVWSALIVGFLILILLLIFI and LPLGVAILLAAVGGGLITVFA.

It is found in the cell membrane. This is an uncharacterized protein from Mycobacterium tuberculosis (strain ATCC 25618 / H37Rv).